Here is a 347-residue protein sequence, read N- to C-terminus: Isopentenyl-diphosphate delta-isomerase (347 aa).

9–10 (RK) contacts substrate. FMN-binding positions include S67, 68 to 70 (SMT), S98, and N127. Residue 98–100 (SQR) coordinates substrate. Position 162 (Q162) interacts with substrate. E163 contacts Mg(2+). Residues K194, T224, 274 to 276 (GIR), and 295 to 296 (AA) contribute to the FMN site.

It belongs to the IPP isomerase type 2 family. As to quaternary structure, homooctamer. Dimer of tetramers. Requires FMN as cofactor. NADPH is required as a cofactor. The cofactor is Mg(2+).

It localises to the cytoplasm. It catalyses the reaction isopentenyl diphosphate = dimethylallyl diphosphate. Its function is as follows. Involved in the biosynthesis of isoprenoids. Catalyzes the 1,3-allylic rearrangement of the homoallylic substrate isopentenyl (IPP) to its allylic isomer, dimethylallyl diphosphate (DMAPP). The sequence is that of Isopentenyl-diphosphate delta-isomerase from Cronobacter sakazakii (strain ATCC BAA-894) (Enterobacter sakazakii).